The chain runs to 409 residues: Multifunctional CCA protein (409 aa).

ATP is bound by residues Gly8 and Arg11. Positions 8 and 11 each coordinate CTP. Mg(2+) is bound by residues Asp21 and Asp23. Residues Arg91, Arg137, and Arg140 each coordinate ATP. Arg91, Arg137, and Arg140 together coordinate CTP. One can recognise an HD domain in the interval 228-329 (TGVHTLSVLE…LELLQSFDVY (102 aa)).

The protein belongs to the tRNA nucleotidyltransferase/poly(A) polymerase family. Bacterial CCA-adding enzyme type 1 subfamily. Monomer. Can also form homodimers and oligomers. Mg(2+) serves as cofactor. Ni(2+) is required as a cofactor.

The enzyme catalyses a tRNA precursor + 2 CTP + ATP = a tRNA with a 3' CCA end + 3 diphosphate. The catalysed reaction is a tRNA with a 3' CCA end + 2 CTP + ATP = a tRNA with a 3' CCACCA end + 3 diphosphate. Its function is as follows. Catalyzes the addition and repair of the essential 3'-terminal CCA sequence in tRNAs without using a nucleic acid template. Adds these three nucleotides in the order of C, C, and A to the tRNA nucleotide-73, using CTP and ATP as substrates and producing inorganic pyrophosphate. tRNA 3'-terminal CCA addition is required both for tRNA processing and repair. Also involved in tRNA surveillance by mediating tandem CCA addition to generate a CCACCA at the 3' terminus of unstable tRNAs. While stable tRNAs receive only 3'-terminal CCA, unstable tRNAs are marked with CCACCA and rapidly degraded. The protein is Multifunctional CCA protein of Pseudomonas fluorescens (strain SBW25).